Reading from the N-terminus, the 404-residue chain is Phosphoglycerate kinase (404 aa).

Substrate is bound by residues 21-23, R38, 61-64, R126, and R159; these read DFN and HLGR. ATP contacts are provided by residues K210, E333, and 360 to 363; that span reads GGDS.

The protein belongs to the phosphoglycerate kinase family. In terms of assembly, monomer.

The protein resides in the cytoplasm. It carries out the reaction (2R)-3-phosphoglycerate + ATP = (2R)-3-phospho-glyceroyl phosphate + ADP. Its pathway is carbohydrate degradation; glycolysis; pyruvate from D-glyceraldehyde 3-phosphate: step 2/5. In Acidobacterium capsulatum (strain ATCC 51196 / DSM 11244 / BCRC 80197 / JCM 7670 / NBRC 15755 / NCIMB 13165 / 161), this protein is Phosphoglycerate kinase.